The primary structure comprises 232 residues: 7-cyano-7-deazaguanine synthase (232 aa).

Residue 7 to 17 (CSGGLDSVSLA) participates in ATP binding. Zn(2+) contacts are provided by Cys185, Cys193, Cys196, and Cys199.

The protein belongs to the QueC family. The cofactor is Zn(2+).

It carries out the reaction 7-carboxy-7-deazaguanine + NH4(+) + ATP = 7-cyano-7-deazaguanine + ADP + phosphate + H2O + H(+). Its pathway is purine metabolism; 7-cyano-7-deazaguanine biosynthesis. Its function is as follows. Catalyzes the ATP-dependent conversion of 7-carboxy-7-deazaguanine (CDG) to 7-cyano-7-deazaguanine (preQ(0)). The chain is 7-cyano-7-deazaguanine synthase from Brucella anthropi (strain ATCC 49188 / DSM 6882 / CCUG 24695 / JCM 21032 / LMG 3331 / NBRC 15819 / NCTC 12168 / Alc 37) (Ochrobactrum anthropi).